The sequence spans 470 residues: MAFSRGVSPGGALLRTSRMFSLPPVIPPPPGNKLQMISERASATEAYPTHQVLTTFESSRSRGDWGLKRPLPLKSTTGTTYPMVKVKEMDSLEQITDFTSGTQHGLTLKKFQALNIPISTPSEISDPSRLFRPVQRSVFEADTDVTAFSPDEQIQEAEKRWKFSGPWLAGMTPGEFKEYLAKTVRPKRAEFRKFIQKKIAAQKTEAANRELQETAALRGDAVAETQEPFKPESITDDEVTEYLRRLRNDNQVLYDLVGQFLDLAPLKPPQAAEARQHSLLVNLRATDSPYGGRGPPITHPSAGISYLRTAAYLNNHPIYGPQKSHPPVQARVLKPRRGGLGNDAKIGVAGFVADGPLGTSHSNLRGNSVMDKFDPSIEGGAKLWVNVDKATVDSTGRVQLTVSDAKATDVLIAKELIGDAREPIFGSAPKRQEKTFKKIPMTAARLRGRYENSDSPSSPTMSGSSGYGLR.

Residues 436–470 are disordered; sequence FKKIPMTAARLRGRYENSDSPSSPTMSGSSGYGLR. A compositionally biased stretch (low complexity) spans 453–464; it reads SDSPSSPTMSGS.

The protein belongs to the bacterial ribosomal protein bS1 family. Component of the mitochondrial small ribosomal subunit (mt-SSU). Mature N.crassa 74S mitochondrial ribosomes consist of a small (37S) and a large (54S) subunit. The 37S small subunit contains a 16S ribosomal RNA (16S mt-rRNA) and 32 different proteins. The 54S large subunit contains a 23S rRNA (23S mt-rRNA) and 42 different proteins.

The protein resides in the mitochondrion. Component of the mitochondrial ribosome (mitoribosome), a dedicated translation machinery responsible for the synthesis of mitochondrial genome-encoded proteins, including at least some of the essential transmembrane subunits of the mitochondrial respiratory chain. The mitoribosomes are attached to the mitochondrial inner membrane and translation products are cotranslationally integrated into the membrane. The sequence is that of Small ribosomal subunit protein bS1m (mrp51) from Neurospora crassa (strain ATCC 24698 / 74-OR23-1A / CBS 708.71 / DSM 1257 / FGSC 987).